The sequence spans 338 residues: Phenylalanine--tRNA ligase alpha subunit (338 aa).

Mg(2+) is bound at residue glutamate 253.

The protein belongs to the class-II aminoacyl-tRNA synthetase family. Phe-tRNA synthetase alpha subunit type 1 subfamily. Tetramer of two alpha and two beta subunits. The cofactor is Mg(2+).

The protein resides in the cytoplasm. It catalyses the reaction tRNA(Phe) + L-phenylalanine + ATP = L-phenylalanyl-tRNA(Phe) + AMP + diphosphate + H(+). In Trichlorobacter lovleyi (strain ATCC BAA-1151 / DSM 17278 / SZ) (Geobacter lovleyi), this protein is Phenylalanine--tRNA ligase alpha subunit.